The following is a 118-amino-acid chain: Aspartate 1-decarboxylase (118 aa).

Serine 25 (schiff-base intermediate with substrate; via pyruvic acid) is an active-site residue. The residue at position 25 (serine 25) is a Pyruvic acid (Ser). Substrate is bound at residue threonine 57. Catalysis depends on tyrosine 58, which acts as the Proton donor. Substrate is bound at residue 73 to 75; sequence GAA.

This sequence belongs to the PanD family. Heterooctamer of four alpha and four beta subunits. Pyruvate serves as cofactor. In terms of processing, is synthesized initially as an inactive proenzyme, which is activated by self-cleavage at a specific serine bond to produce a beta-subunit with a hydroxyl group at its C-terminus and an alpha-subunit with a pyruvoyl group at its N-terminus.

The protein localises to the cytoplasm. It carries out the reaction L-aspartate + H(+) = beta-alanine + CO2. It functions in the pathway cofactor biosynthesis; (R)-pantothenate biosynthesis; beta-alanine from L-aspartate: step 1/1. Functionally, catalyzes the pyruvoyl-dependent decarboxylation of aspartate to produce beta-alanine. This Leptospira biflexa serovar Patoc (strain Patoc 1 / Ames) protein is Aspartate 1-decarboxylase.